Here is a 98-residue protein sequence, read N- to C-terminus: NADH-ubiquinone oxidoreductase chain 4L (98 aa).

Transmembrane regions (helical) follow at residues 1–21 (MVLI…GVLI), 36–56 (MMLS…MFSI), and 61–81 (LILL…LVTI).

This sequence belongs to the complex I subunit 4L family. As to quaternary structure, core subunit of respiratory chain NADH dehydrogenase (Complex I) which is composed of 45 different subunits.

Its subcellular location is the mitochondrion inner membrane. It carries out the reaction a ubiquinone + NADH + 5 H(+)(in) = a ubiquinol + NAD(+) + 4 H(+)(out). Core subunit of the mitochondrial membrane respiratory chain NADH dehydrogenase (Complex I) which catalyzes electron transfer from NADH through the respiratory chain, using ubiquinone as an electron acceptor. Part of the enzyme membrane arm which is embedded in the lipid bilayer and involved in proton translocation. The polypeptide is NADH-ubiquinone oxidoreductase chain 4L (MT-ND4L) (Metachirus nudicaudatus (Brown four-eyed opossum)).